A 230-amino-acid polypeptide reads, in one-letter code: Large ribosomal subunit protein bL25 (230 aa).

It belongs to the bacterial ribosomal protein bL25 family. CTC subfamily. Part of the 50S ribosomal subunit; part of the 5S rRNA/L5/L18/L25 subcomplex. Contacts the 5S rRNA. Binds to the 5S rRNA independently of L5 and L18.

In terms of biological role, this is one of the proteins that binds to the 5S RNA in the ribosome where it forms part of the central protuberance. The chain is Large ribosomal subunit protein bL25 (rplY) from Rhodopseudomonas palustris (strain ATCC BAA-98 / CGA009).